Reading from the N-terminus, the 209-residue chain is Orotate phosphoribosyltransferase (209 aa).

5-phospho-alpha-D-ribose 1-diphosphate contacts are provided by residues Arg96, Lys100, His102, and 122 to 130; that span reads EDLISTGGS. Residue Ser126 coordinates orotate.

The protein belongs to the purine/pyrimidine phosphoribosyltransferase family. PyrE subfamily. In terms of assembly, homodimer. Requires Mg(2+) as cofactor.

It carries out the reaction orotidine 5'-phosphate + diphosphate = orotate + 5-phospho-alpha-D-ribose 1-diphosphate. It participates in pyrimidine metabolism; UMP biosynthesis via de novo pathway; UMP from orotate: step 1/2. Catalyzes the transfer of a ribosyl phosphate group from 5-phosphoribose 1-diphosphate to orotate, leading to the formation of orotidine monophosphate (OMP). The polypeptide is Orotate phosphoribosyltransferase (Streptococcus thermophilus (strain ATCC BAA-491 / LMD-9)).